A 173-amino-acid polypeptide reads, in one-letter code: Photosystem I assembly protein Ycf3 (173 aa).

TPR repeat units lie at residues 35–68, 72–105, and 120–153; these read AFYY…EKDP, SFIL…NPNL, and GNKL…APYN.

This sequence belongs to the Ycf3 family.

It localises to the plastid. It is found in the chloroplast thylakoid membrane. Functionally, essential for the assembly of the photosystem I (PSI) complex. May act as a chaperone-like factor to guide the assembly of the PSI subunits. This chain is Photosystem I assembly protein Ycf3, found in Cyanidium caldarium (Red alga).